A 558-amino-acid polypeptide reads, in one-letter code: DEAD-box ATP-dependent RNA helicase 49 (558 aa).

Positions 16–44 match the Q motif motif; the sequence is FSELKPPLSEDIIEALDRSGFEVCTPVQA. Positions 47–226 constitute a Helicase ATP-binding domain; the sequence is IPFLCSHKDV…KAGLRNAMEV (180 aa). Residue 60–67 coordinates ATP; sequence AATGSGKT. The short motif at 174–177 is the DEAD box element; the sequence is DEAD. Residues 255–402 form the Helicase C-terminal domain; it reads QLVHLLIENK…ERKCSENASD (148 aa). The disordered stretch occupies residues 506–558; that stretch reads KDKLQQEKRGKRKKSSKEAVDDSNKASRKRKLTGRQRQTIQTAQDEEEMNLRL. Residues 521-530 show a composition bias toward basic and acidic residues; it reads SKEAVDDSNK. Positions 549–558 are enriched in acidic residues; that stretch reads QDEEEMNLRL.

This sequence belongs to the DEAD box helicase family. DDX55/SPB4 subfamily.

It catalyses the reaction ATP + H2O = ADP + phosphate + H(+). The polypeptide is DEAD-box ATP-dependent RNA helicase 49 (RH49) (Arabidopsis thaliana (Mouse-ear cress)).